We begin with the raw amino-acid sequence, 240 residues long: PF03932 family protein CutC (240 aa).

It belongs to the CutC family.

The protein resides in the cytoplasm. This Xanthomonas axonopodis pv. citri (strain 306) protein is PF03932 family protein CutC.